A 120-amino-acid polypeptide reads, in one-letter code: Ribosome-binding factor A (120 aa).

This sequence belongs to the RbfA family. In terms of assembly, monomer. Binds 30S ribosomal subunits, but not 50S ribosomal subunits or 70S ribosomes.

Its subcellular location is the cytoplasm. In terms of biological role, one of several proteins that assist in the late maturation steps of the functional core of the 30S ribosomal subunit. Associates with free 30S ribosomal subunits (but not with 30S subunits that are part of 70S ribosomes or polysomes). Required for efficient processing of 16S rRNA. May interact with the 5'-terminal helix region of 16S rRNA. The polypeptide is Ribosome-binding factor A (Rickettsia rickettsii (strain Iowa)).